The chain runs to 280 residues: UDP-3-O-acyl-N-acetylglucosamine deacetylase (280 aa).

3 residues coordinate Zn(2+): His77, His238, and Asp242. His265 functions as the Proton donor in the catalytic mechanism.

This sequence belongs to the LpxC family. Zn(2+) is required as a cofactor.

The enzyme catalyses a UDP-3-O-[(3R)-3-hydroxyacyl]-N-acetyl-alpha-D-glucosamine + H2O = a UDP-3-O-[(3R)-3-hydroxyacyl]-alpha-D-glucosamine + acetate. The protein operates within glycolipid biosynthesis; lipid IV(A) biosynthesis; lipid IV(A) from (3R)-3-hydroxytetradecanoyl-[acyl-carrier-protein] and UDP-N-acetyl-alpha-D-glucosamine: step 2/6. In terms of biological role, catalyzes the hydrolysis of UDP-3-O-myristoyl-N-acetylglucosamine to form UDP-3-O-myristoylglucosamine and acetate, the committed step in lipid A biosynthesis. This chain is UDP-3-O-acyl-N-acetylglucosamine deacetylase, found in Trichormus variabilis (strain ATCC 29413 / PCC 7937) (Anabaena variabilis).